A 128-amino-acid chain; its full sequence is Large ribosomal subunit protein bL12 (128 aa).

This sequence belongs to the bacterial ribosomal protein bL12 family. Homodimer. Part of the ribosomal stalk of the 50S ribosomal subunit. Forms a multimeric L10(L12)X complex, where L10 forms an elongated spine to which 2 to 4 L12 dimers bind in a sequential fashion. Binds GTP-bound translation factors.

In terms of biological role, forms part of the ribosomal stalk which helps the ribosome interact with GTP-bound translation factors. Is thus essential for accurate translation. The sequence is that of Large ribosomal subunit protein bL12 from Rubrobacter xylanophilus (strain DSM 9941 / JCM 11954 / NBRC 16129 / PRD-1).